The sequence spans 353 residues: MTAILERRESTSLWGRFCNWITSTENRLYIGWFGVLMIPTLLTATSVFIIAFIAAPPVDIDGIREPVSGSLLYGNNIISGAIIPTSAAIGLHFYPIWEAASVDEWLYNGGPYELIVLHFLLGVACYMGREWELSFRLGMRPWIAVAYSAPVAAATAVFLIYPIGQGSFSDGMPLGISGTFNFMIVFQAEHNILMHPFHMLGVAGVFGGSLFSAMHGSLVTSSLIRETTENESANEGYKFGQEEETYNIVAAHGYFGRLIFQYASFNNSRSLHFFLAAWPVVGIWFTALGISTMAFNLNGFNFNQSVVDSQGRVINTWADIINRANLGMEVMHERNAHNFPLDLAALEVPSING.

N-acetylthreonine is present on T2. T2 is modified (phosphothreonine). 3 consecutive transmembrane segments (helical) span residues 29 to 46, 118 to 133, and 142 to 156; these read YIGWFGVLMIPTLLTATS, HFLLGVACYMGREWEL, and WIAVAYSAPVAAATA. Residue H118 coordinates chlorophyll a. Position 126 (Y126) interacts with pheophytin a. Positions 170 and 189 each coordinate [CaMn4O5] cluster. Residues 197-218 traverse the membrane as a helical segment; it reads FHMLGVAGVFGGSLFSAMHGSL. Residue H198 coordinates chlorophyll a. Residues H215 and 264-265 each bind a quinone; that span reads SF. H215 serves as a coordination point for Fe cation. Residue H272 coordinates Fe cation. A helical transmembrane segment spans residues 274 to 288; that stretch reads FLAAWPVVGIWFTAL. 4 residues coordinate [CaMn4O5] cluster: H332, E333, D342, and A344. A propeptide spanning residues 345 to 353 is cleaved from the precursor; the sequence is ALEVPSING.

Belongs to the reaction center PufL/M/PsbA/D family. As to quaternary structure, PSII is composed of 1 copy each of membrane proteins PsbA, PsbB, PsbC, PsbD, PsbE, PsbF, PsbH, PsbI, PsbJ, PsbK, PsbL, PsbM, PsbT, PsbX, PsbY, PsbZ, Psb30/Ycf12, at least 3 peripheral proteins of the oxygen-evolving complex and a large number of cofactors. It forms dimeric complexes. The D1/D2 heterodimer binds P680, chlorophylls that are the primary electron donor of PSII, and subsequent electron acceptors. It shares a non-heme iron and each subunit binds pheophytin, quinone, additional chlorophylls, carotenoids and lipids. D1 provides most of the ligands for the Mn4-Ca-O5 cluster of the oxygen-evolving complex (OEC). There is also a Cl(-1) ion associated with D1 and D2, which is required for oxygen evolution. The PSII complex binds additional chlorophylls, carotenoids and specific lipids. serves as cofactor. Post-translationally, tyr-161 forms a radical intermediate that is referred to as redox-active TyrZ, YZ or Y-Z. In terms of processing, C-terminally processed by CTPA; processing is essential to allow assembly of the oxygen-evolving complex and thus photosynthetic growth.

It localises to the plastid. It is found in the chloroplast thylakoid membrane. It carries out the reaction 2 a plastoquinone + 4 hnu + 2 H2O = 2 a plastoquinol + O2. Its function is as follows. Photosystem II (PSII) is a light-driven water:plastoquinone oxidoreductase that uses light energy to abstract electrons from H(2)O, generating O(2) and a proton gradient subsequently used for ATP formation. It consists of a core antenna complex that captures photons, and an electron transfer chain that converts photonic excitation into a charge separation. The D1/D2 (PsbA/PsbD) reaction center heterodimer binds P680, the primary electron donor of PSII as well as several subsequent electron acceptors. In Agrostis stolonifera (Creeping bentgrass), this protein is Photosystem II protein D1.